The sequence spans 310 residues: Tyrosine recombinase XerC (310 aa).

Positions 1–92 (MDELIKEFDR…SLRAFFKYLH (92 aa)) constitute a Core-binding (CB) domain. The Tyr recombinase domain maps to 113-300 (YIPAVLSVDE…SVNRLMAVYD (188 aa)). Active-site residues include Arg153, Lys177, His252, Arg255, and His278. Tyr287 functions as the O-(3'-phospho-DNA)-tyrosine intermediate in the catalytic mechanism.

The protein belongs to the 'phage' integrase family. XerC subfamily. Forms a cyclic heterotetrameric complex composed of two molecules of XerC and two molecules of XerD.

Its subcellular location is the cytoplasm. Site-specific tyrosine recombinase, which acts by catalyzing the cutting and rejoining of the recombining DNA molecules. The XerC-XerD complex is essential to convert dimers of the bacterial chromosome into monomers to permit their segregation at cell division. It also contributes to the segregational stability of plasmids. This chain is Tyrosine recombinase XerC, found in Syntrophus aciditrophicus (strain SB).